Consider the following 431-residue polypeptide: Tyrosine--tRNA ligase (431 aa).

Y34 is an L-tyrosine binding site. The short motif at 39-48 (PTADSLHIGH) is the 'HIGH' region element. L-tyrosine contacts are provided by Y171 and Q175. Residues 231–235 (KFGKT) carry the 'KMSKS' region motif. Position 234 (K234) interacts with ATP. Residues 353–422 (INVVEALVKT…GKYTILRRGK (70 aa)) form the S4 RNA-binding domain.

It belongs to the class-I aminoacyl-tRNA synthetase family. TyrS type 1 subfamily. In terms of assembly, homodimer.

It is found in the cytoplasm. The catalysed reaction is tRNA(Tyr) + L-tyrosine + ATP = L-tyrosyl-tRNA(Tyr) + AMP + diphosphate + H(+). Its function is as follows. Catalyzes the attachment of tyrosine to tRNA(Tyr) in a two-step reaction: tyrosine is first activated by ATP to form Tyr-AMP and then transferred to the acceptor end of tRNA(Tyr). The protein is Tyrosine--tRNA ligase of Neisseria meningitidis serogroup A / serotype 4A (strain DSM 15465 / Z2491).